Consider the following 25-residue polypeptide: Alpha-amylase inhibitor (25 aa).

In terms of assembly, monomer or homodimer. In terms of processing, may exist both in a glycosylated and in an unglycosylated form.

The protein resides in the secreted. Inhibits alpha-amylases but not trypsin. Is more effective against insect alpha-amylases than those of mammals. In Secale cereale (Rye), this protein is Alpha-amylase inhibitor.